The chain runs to 322 residues: Lymphokine-activated killer T-cell-originated protein kinase (322 aa).

Met-1 carries the post-translational modification N-acetylmethionine. Residues Thr-9 and Thr-24 each carry the phosphothreonine modification. Ser-32 is modified (phosphoserine). Residues 32–322 (SPFMQKLGFG…HIVEALETDV (291 aa)) enclose the Protein kinase domain. 38–46 (LGFGTGVNV) lines the ATP pocket. At Ser-59 the chain carries Phosphoserine. Lys-64 serves as a coordination point for ATP. Asp-167 functions as the Proton acceptor in the catalytic mechanism. A Glycyl lysine isopeptide (Lys-Gly) (interchain with G-Cter in SUMO2) cross-link involves residue Lys-169. Positions 320-322 (TDV) are PDZ-interaction.

It belongs to the protein kinase superfamily. STE Ser/Thr protein kinase family. MAP kinase kinase subfamily. Interacts with DLG1 and TP53. In terms of processing, phosphorylated; in a cell-cycle dependent manner at mitosis. In terms of tissue distribution, expressed in the testis and placenta. In the testis, restrictedly expressed in outer cell layer of seminiferous tubules.

It catalyses the reaction L-seryl-[protein] + ATP = O-phospho-L-seryl-[protein] + ADP + H(+). The catalysed reaction is L-threonyl-[protein] + ATP = O-phospho-L-threonyl-[protein] + ADP + H(+). The enzyme catalyses L-tyrosyl-[protein] + ATP = O-phospho-L-tyrosyl-[protein] + ADP + H(+). Activated by phosphorylation. In terms of biological role, phosphorylates MAP kinase p38. Seems to be active only in mitosis. May also play a role in the activation of lymphoid cells. When phosphorylated, forms a complex with TP53, leading to TP53 destabilization and attenuation of G2/M checkpoint during doxorubicin-induced DNA damage. This is Lymphokine-activated killer T-cell-originated protein kinase (PBK) from Homo sapiens (Human).